The primary structure comprises 296 residues: Bifunctional protein FolD (296 aa).

NADP(+) contacts are provided by residues 166–168, serine 195, and threonine 236; that span reads GRS.

The protein belongs to the tetrahydrofolate dehydrogenase/cyclohydrolase family. As to quaternary structure, homodimer.

It carries out the reaction (6R)-5,10-methylene-5,6,7,8-tetrahydrofolate + NADP(+) = (6R)-5,10-methenyltetrahydrofolate + NADPH. It catalyses the reaction (6R)-5,10-methenyltetrahydrofolate + H2O = (6R)-10-formyltetrahydrofolate + H(+). Its pathway is one-carbon metabolism; tetrahydrofolate interconversion. Catalyzes the oxidation of 5,10-methylenetetrahydrofolate to 5,10-methenyltetrahydrofolate and then the hydrolysis of 5,10-methenyltetrahydrofolate to 10-formyltetrahydrofolate. The polypeptide is Bifunctional protein FolD (Dehalococcoides mccartyi (strain ATCC BAA-2100 / JCM 16839 / KCTC 5957 / BAV1)).